Reading from the N-terminus, the 289-residue chain is Early E1A protein (289 aa).

Positions 41-49 (PTLHELYDL) are interaction with RB1 in competition with E2F1. The segment at 76–140 (EGIDLLTFPP…PSDDEDEEGE (65 aa)) is interaction with UBE2I. The segment at 82 to 107 (TFPPAPGSPEPPHLSRQPEQPEQRAL) is disordered. The segment covering 84–93 (PPAPGSPEPP) has biased composition (pro residues). At Ser-89 the chain carries Phosphoserine; by host. The short motif at 113–117 (PNLVP) is the PXLXP motif, interaction with host ZMYND11 element. An LXCXE motif, interaction with host RB1 and TMEM173/STING motif is present at residues 122–126 (LTCHE). The segment at 154 to 174 (CRSCHYHRRNTGDPDIMCSLC) is a zinc-finger region. The segment at 187-245 (VSEPEPEPEPEPEPARPTRRPKLVPAILRRPTSPVSRECNSSTDSCDSGPSNTPPEIHP) is disordered. A phosphoserine; by host mark is found at Ser-219 and Ser-231. Positions 219-237 (SPVSRECNSSTDSCDSGPS) are enriched in polar residues. A Bipartite nuclear localization signal motif is present at residues 258–289 (RVGGRRQAVECIEDLLNESGQPLDLSCKRPRP). A PXDLS motif, CTBP-binding motif is present at residues 279–283 (PLDLS).

Belongs to the adenoviridae E1A protein family. In terms of assembly, interacts with host UBE2I; this interaction interferes with polySUMOylation. Interacts with host RB1; this interaction induces the aberrant dissociation of RB1-E2F1 complex thereby disrupting the activity of RB1 and activating E2F1-regulated genes. Interacts with host ATF7; the interaction enhances ATF7-mediated viral transactivation activity which requires the zinc binding domains of both proteins. Isoform early E1A 32 kDa protein and isoform early E1A 26 kDa protein interact (via N-terminus) with CUL1 and E3 ubiquitin ligase RBX1; these interactions inhibit RBX1-CUL1-dependent elongation reaction of ubiquitin chains and attenuate ubiquitination of SCF(FBXW7) target proteins. Interacts (via PXLXP motif) with host ZMYND11/BS69 (via MYND-type zinc finger); this interaction inhibits E1A mediated transactivation. Interacts with host EP300; this interaction stimulates the acetylation of RB1 by recruiting EP300 and RB1 into a multimeric-protein complex. Interacts with host CTBP1 and CTBP2; this interaction seems to potentiate viral replication. Interacts with host DCAF7. Interacts with host DYRK1A. Interacts with host KPNA4; this interaction allows E1A import into the host nucleus. Interacts with host EP400; this interaction stabilizes MYC. Interacts (via LXCXE motif) with host TMEM173/STING; this interaction impairs the ability of TMEM173/STING to sense cytosolic DNA and promote the production of type I interferon (IFN-alpha and IFN-beta). Interacts (via C-terminus) with host ZBED1/hDREF (via C-terminus); the interaction is direct.

The protein localises to the host nucleus. Plays a role in viral genome replication by driving entry of quiescent cells into the cell cycle. Stimulation of progression from G1 to S phase allows the virus to efficiently use the cellular DNA replicating machinery to achieve viral genome replication. E1A protein has both transforming and trans-activating activities. Induces the disassembly of the E2F1 transcription factor from RB1 by direct competition for the same binding site on RB1, with subsequent transcriptional activation of E2F1-regulated S-phase genes and of the E2 region of the adenoviral genome. Release of E2F1 leads to the ARF-mediated inhibition of MDM2 and causes TP53/p53 to accumulate because it is not targeted for degradation by MDM2-mediated ubiquitination anymore. This increase in TP53, in turn, would arrest the cell proliferation and direct its death but this effect is counteracted by the viral protein E1B-55K. Inactivation of the ability of RB1 to arrest the cell cycle is critical for cellular transformation, uncontrolled cellular growth and proliferation induced by viral infection. Interaction with RBX1 and CUL1 inhibits ubiquitination of the proteins targeted by SCF(FBXW7) ubiquitin ligase complex, and may be linked to unregulated host cell proliferation. The tumorigenesis-restraining activity of E1A may be related to the disruption of the host CtBP-CtIP complex through the CtBP binding motif. Interacts with host TBP protein; this interaction probably disrupts the TBP-TATA complex. Interaction with host TMEM173/STING impairs the ability of TMEM173/STING to sense cytosolic DNA and promote the production of type I interferon (IFN-alpha and IFN-beta). Promotes the sumoylation of host ZBED1/hDREF with SUMO1. This chain is Early E1A protein, found in Homo sapiens (Human).